The sequence spans 146 residues: MGGTADFVLSITIVLVILIIIAFIWYNFTGWSPFKYSKGNTVTFKTPDESSIAYMRFRNCIFTFTDPKGSLHSIDVTEVLNNMAKGFRDAQNPPSSFTLGGHCQAPLNAFSFVLPGVNDRATVATADDAKKWENCDATLTGLQRII.

The chain crosses the membrane as a helical span at residues 7-27 (FVLSITIVLVILIIIAFIWYN).

Belongs to the asfivirus E146L family.

Its subcellular location is the host membrane. The protein resides in the virion. This is an uncharacterized protein from Ornithodoros (relapsing fever ticks).